Consider the following 340-residue polypeptide: Glucokinase (340 aa).

17-22 (GDIGGT) contacts ATP.

Belongs to the bacterial glucokinase family.

The protein resides in the cytoplasm. The enzyme catalyses D-glucose + ATP = D-glucose 6-phosphate + ADP + H(+). The protein is Glucokinase of Agrobacterium fabrum (strain C58 / ATCC 33970) (Agrobacterium tumefaciens (strain C58)).